The following is a 506-amino-acid chain: MALLDTIELFSNFSLSGVFAGLVLASLLTTTYCIWNIFYNIYLHPLKGYPGPKFLTTSRLPYLKWMFSGTLVPNFQRLHEQYGPVVRVAPNELSYINPEALKTIYGHRQPGEGFRKNPAFFQPATNGVHSILTSEGDAHSSVRRKILPAFSDKALAEQQDILQHFTDLLIRKLRERVEASKSSEPVDMFEWYIWTTFDLIGDLAFGEPFNCLEAASFTEWVALVFNAFKTFAFINISKQLAPLDKLVRLMIPKSMKARQDKVFSLNVAKVDRRIASKADRPDFLSYIIKGKDGVAMALPELYANSTLLVLAGSESTASGLAGITFELLKHREAQKKAVEEIRSAFKTEDEIVPESVKRLPYLAAMVSEGLRMYPPFPEGLPRLTPRQGAQICGQWVPGGTYVQFSTHAAHRASANFTDPNVFAPERWLGDTKFASDIKEASQPFSIGPRSCIGRNLAYLEMRLILARMLWSFDMQLTPECEDWDDQNSWIQWDKKPLMVKLSLVKR.

The chain crosses the membrane as a helical span at residues 18 to 38 (VFAGLVLASLLTTTYCIWNIF). Cys-451 serves as a coordination point for heme.

It belongs to the cytochrome P450 family. Requires heme as cofactor.

The protein resides in the membrane. The catalysed reaction is 4-O-demethylbarbatate + reduced [NADPH--hemoprotein reductase] + O2 = proatranorin II + oxidized [NADPH--hemoprotein reductase] + H2O + H(+). It carries out the reaction proatranorin II + reduced [NADPH--hemoprotein reductase] + O2 = proatranorin III + oxidized [NADPH--hemoprotein reductase] + 2 H2O + H(+). It catalyses the reaction proatranorin I + reduced [NADPH--hemoprotein reductase] + O2 = proatranorin IV + oxidized [NADPH--hemoprotein reductase] + H2O + H(+). The enzyme catalyses proatranorin IV + reduced [NADPH--hemoprotein reductase] + O2 = atranorin + oxidized [NADPH--hemoprotein reductase] + 2 H2O + H(+). It functions in the pathway secondary metabolite biosynthesis; terpenoid biosynthesis. Cytochrome P450 monooxygenase; part of the gene cluster that mediates the biosynthesis of atranorin, a depside of polyketide origin that accumulates in the cortical or medullary layers of lichen thalli. Atr2 performs the oxidation at the C-9 position of 4-O-demethylbarbatic acid to yield proatranorin III via proatranorin II. Atr2 is also able to oxidize the atr3 product proatranorin I to produce the final compound atranorin. The first step in the pathway is performed by the non-reducing polyketide synthase atr1 that produces 4-O-demethylbarbatic acid composed of two 3-methylorsellinic acid (3MOA) moieties. The pathway continues with the actions of the cytochrome P450 monooygenase atr2 that catalizes the oxidation of c-9 and the O-methyltransferase atr3 that performs the methylation of the carboxyl group to yield atranorin, via the proatranorin II and III intermediates if atr2 acts first, or the proatranorin I intermediate if atr3 acts first. In Stereocaulon alpinum (Alpine snow lichen), this protein is Cytochrome P450 monooxygenase atr2.